Consider the following 489-residue polypeptide: Putative ABC transporter ATP-binding protein TDE_0282 (489 aa).

ABC transporter domains follow at residues isoleucine 2 to leucine 241 and phenylalanine 269 to glutamate 487. ATP contacts are provided by residues glycine 36–threonine 43 and glycine 301–threonine 308.

It belongs to the ABC transporter superfamily.

The protein localises to the cell inner membrane. Probably part of an ABC transporter complex. Responsible for energy coupling to the transport system. The protein is Putative ABC transporter ATP-binding protein TDE_0282 of Treponema denticola (strain ATCC 35405 / DSM 14222 / CIP 103919 / JCM 8153 / KCTC 15104).